Consider the following 538-residue polypeptide: Chaperonin GroEL (538 aa).

ATP contacts are provided by residues 29–32 (TIGP), 86–90 (DGTTT), glycine 413, 476–478 (NAA), and aspartate 492.

It belongs to the chaperonin (HSP60) family. As to quaternary structure, forms a cylinder of 14 subunits composed of two heptameric rings stacked back-to-back. Interacts with the co-chaperonin GroES.

It localises to the cytoplasm. It carries out the reaction ATP + H2O + a folded polypeptide = ADP + phosphate + an unfolded polypeptide.. Together with its co-chaperonin GroES, plays an essential role in assisting protein folding. The GroEL-GroES system forms a nano-cage that allows encapsulation of the non-native substrate proteins and provides a physical environment optimized to promote and accelerate protein folding. This chain is Chaperonin GroEL, found in Staphylococcus aureus (strain MRSA252).